The sequence spans 142 residues: Nucleoside diphosphate kinase (142 aa).

Positions 11, 59, 87, 93, 104, and 114 each coordinate ATP. His-117 serves as the catalytic Pros-phosphohistidine intermediate.

Belongs to the NDK family. As to quaternary structure, homotetramer. It depends on Mg(2+) as a cofactor.

It is found in the cytoplasm. The enzyme catalyses a 2'-deoxyribonucleoside 5'-diphosphate + ATP = a 2'-deoxyribonucleoside 5'-triphosphate + ADP. The catalysed reaction is a ribonucleoside 5'-diphosphate + ATP = a ribonucleoside 5'-triphosphate + ADP. Functionally, major role in the synthesis of nucleoside triphosphates other than ATP. The ATP gamma phosphate is transferred to the NDP beta phosphate via a ping-pong mechanism, using a phosphorylated active-site intermediate. The chain is Nucleoside diphosphate kinase from Pectobacterium atrosepticum (strain SCRI 1043 / ATCC BAA-672) (Erwinia carotovora subsp. atroseptica).